The chain runs to 815 residues: DNA topoisomerase 1 (815 aa).

In terms of domain architecture, Toprim spans 3-119; the sequence is KHLLIVESPA…QRIVFTEITP (117 aa). Glu9 and Asp82 together coordinate Mg(2+). The Topo IA-type catalytic domain occupies 133 to 573; that stretch reads ASDLVDAQQA…KFWVPFKELV (441 aa). Residues 167–172 form an interaction with DNA region; sequence SAGRVQ. The O-(5'-phospho-DNA)-tyrosine intermediate role is filled by Tyr308. Residues 760–815 are disordered; the sequence is GKPARKNFSTKKTATKNETRKQTTKKRTTDAKATKKVSDKPVKKQIKKRIAPNITE. A compositionally biased stretch (basic and acidic residues) spans 774–801; it reads TKNETRKQTTKKRTTDAKATKKVSDKPV.

It belongs to the type IA topoisomerase family. In terms of assembly, monomer. Requires Mg(2+) as cofactor.

It carries out the reaction ATP-independent breakage of single-stranded DNA, followed by passage and rejoining.. Its function is as follows. Releases the supercoiling and torsional tension of DNA, which is introduced during the DNA replication and transcription, by transiently cleaving and rejoining one strand of the DNA duplex. Introduces a single-strand break via transesterification at a target site in duplex DNA. The scissile phosphodiester is attacked by the catalytic tyrosine of the enzyme, resulting in the formation of a DNA-(5'-phosphotyrosyl)-enzyme intermediate and the expulsion of a 3'-OH DNA strand. The free DNA strand then undergoes passage around the unbroken strand, thus removing DNA supercoils. Finally, in the religation step, the DNA 3'-OH attacks the covalent intermediate to expel the active-site tyrosine and restore the DNA phosphodiester backbone. The polypeptide is DNA topoisomerase 1 (Xylella fastidiosa (strain 9a5c)).